The sequence spans 422 residues: Chorismate synthase (422 aa).

2 residues coordinate NADP(+): arginine 43 and arginine 49. FMN-binding positions include 143 to 145, 264 to 265, glycine 309, 324 to 328, and arginine 350; these read RSS, QA, and KPIST.

Belongs to the chorismate synthase family. As to quaternary structure, homotetramer. Requires FMNH2 as cofactor.

The catalysed reaction is 5-O-(1-carboxyvinyl)-3-phosphoshikimate = chorismate + phosphate. It functions in the pathway metabolic intermediate biosynthesis; chorismate biosynthesis; chorismate from D-erythrose 4-phosphate and phosphoenolpyruvate: step 7/7. Its function is as follows. Catalyzes the anti-1,4-elimination of the C-3 phosphate and the C-6 proR hydrogen from 5-enolpyruvylshikimate-3-phosphate (EPSP) to yield chorismate, which is the branch point compound that serves as the starting substrate for the three terminal pathways of aromatic amino acid biosynthesis. This reaction introduces a second double bond into the aromatic ring system. The protein is Chorismate synthase of Corynebacterium jeikeium (strain K411).